The primary structure comprises 229 residues: Ribonuclease 3 (229 aa).

The RNase III domain maps to 5–127 (LDRLERKLGY…LIGAIYLDTG (123 aa)). Glu-40 lines the Mg(2+) pocket. Asp-44 is an active-site residue. Positions 113 and 116 each coordinate Mg(2+). Glu-116 is an active-site residue. The DRBM domain maps to 154–224 (DPKTRLQEFL…AAAALVALGV (71 aa)).

The protein belongs to the ribonuclease III family. In terms of assembly, homodimer. Requires Mg(2+) as cofactor.

The protein resides in the cytoplasm. It carries out the reaction Endonucleolytic cleavage to 5'-phosphomonoester.. Its function is as follows. Digests double-stranded RNA. Involved in the processing of primary rRNA transcript to yield the immediate precursors to the large and small rRNAs (23S and 16S). Processes some mRNAs, and tRNAs when they are encoded in the rRNA operon. Processes pre-crRNA and tracrRNA of type II CRISPR loci if present in the organism. The sequence is that of Ribonuclease 3 from Pseudomonas paraeruginosa (strain DSM 24068 / PA7) (Pseudomonas aeruginosa (strain PA7)).